The sequence spans 361 residues: AT-hook motif nuclear-localized protein 12 (361 aa).

Disordered stretches follow at residues 29–143 (SQVA…GRKQ) and 286–361 (NNKT…LTRG). The span at 48–59 (SNPNIHHPQANN) shows a compositional bias: polar residues. The segment covering 85–95 (QPPPPPPPPEE) has biased composition (pro residues). The short motif at 99-107 (KRKRGRPRK) is the Bipartite nuclear localization signal element. DNA-binding regions (a.T hook) lie at residues 99–111 (KRKR…YGEP) and 130–142 (KRAR…TGRK). The PPC domain occupies 154–297 (TSAGLAFAPH…KTIRQEKEPN (144 aa)). The span at 306–322 (ETTPGSAAEPAASAGQQ) shows a compositional bias: low complexity.

In terms of assembly, homodimer. Interacts with AHL27, AHL29 and ATAF2/NAC081.

It localises to the nucleus. Transcription factor that specifically binds AT-rich DNA sequences related to the nuclear matrix attachment regions (MARs). The chain is AT-hook motif nuclear-localized protein 12 from Arabidopsis thaliana (Mouse-ear cress).